A 473-amino-acid polypeptide reads, in one-letter code: Reticulon-4 receptor (473 aa).

The first 26 residues, 1–26, serve as a signal peptide directing secretion; that stretch reads MKRASSGGSRLLAWVLWLQAWRVATP. Disulfide bonds link cysteine 27/cysteine 33 and cysteine 31/cysteine 43. In terms of domain architecture, LRRNT spans 27 to 57; sequence CPGACVCYNEPKVTTSCPQQGLQAVPTGIPA. LRR repeat units lie at residues 58–79, 82–103, 106–128, 131–152, 155–176, 179–200, 203–224, and 227–248; these read SSQR…SFQS, NLTI…AFTG, LLEQ…TFHG, HLHT…LFRG, ALQY…TFRD, NLTH…AFRG, SLDR…AFRD, and RLMT…VLMP. Asparagine 82 carries N-linked (GlcNAc...) asparagine glycosylation. An N-linked (GlcNAc...) asparagine glycan is attached at asparagine 179. In terms of domain architecture, LRRCT spans 260–311; the sequence is NPWVCDCRARPLWAWLQKFRGSSSEVPCNLPQRLADRDLKRLAASDLEGCAV. 3 cysteine pairs are disulfide-bonded: cysteine 264–cysteine 287, cysteine 266–cysteine 335, and cysteine 309–cysteine 336. Residues 346–446 form a disordered region; it reads VLEPGRPASA…GASGTGDAEG (101 aa). N-linked (GlcNAc...) asparagine glycosylation is present at asparagine 372. Over residues 413-429 the composition is skewed to basic residues; that stretch reads PRRRPGCSRKNRTRSHC. The span at 434–445 shows a compositional bias: gly residues; the sequence is AGSGASGTGDAE. The GPI-anchor amidated serine moiety is linked to residue serine 447. Positions 448 to 473 are cleaved as a propeptide — removed in mature form; it reads GALPALACSLAPLGLALVLWTVLGPC.

The protein belongs to the Nogo receptor family. In terms of assembly, homodimer. Interacts with MAG. Interacts with RTN4. Interacts with NGFR. Interacts with LINGO1. Interacts with KIAA0319L. Interacts with OLFM1; this inhibits interaction with LINGO1 and NGFR. Interacts with OMG. N-glycosylated. O-glycosylated. Contains terminal sialic acid groups on its glycan chains. In terms of tissue distribution, detected in embryonic hippocampus neurons. Detected in brain (at protein level). Detected in neurons in the neocortex, in hippocampus, dorsal thalamus, cerebellum granule cell layer and the mitral cell layer in the olfactory bulb. Detected in brain, dorsal root ganglion and heart.

It is found in the cell membrane. Its subcellular location is the membrane raft. It localises to the cell projection. The protein localises to the dendrite. The protein resides in the axon. It is found in the perikaryon. Receptor for RTN4, OMG and MAG. Functions as a receptor for the sialylated gangliosides GT1b and GM1. Besides, functions as a receptor for chondroitin sulfate proteoglycans. Can also bind heparin. Intracellular signaling cascades are triggered via the coreceptor NGFR. Signaling mediates activation of Rho and downstream reorganization of the actin cytoskeleton. Mediates axonal growth inhibition. Mediates axonal growth inhibition and plays a role in regulating axon regeneration and neuronal plasticity in the adult central nervous system. Plays a role in postnatal brain development. Required for normal axon migration across the brain midline and normal formation of the corpus callosum. Protects motoneurons against apoptosis; protection against apoptosis is probably mediated via interaction with MAG. Acts in conjunction with RTN4 and LINGO1 in regulating neuronal precursor cell motility during cortical development. Like other family members, plays a role in restricting the number dendritic spines and the number of synapses that are formed during brain development. The sequence is that of Reticulon-4 receptor (Rtn4r) from Mus musculus (Mouse).